Consider the following 141-residue polypeptide: Large ribosomal subunit protein uL11 (141 aa).

Belongs to the universal ribosomal protein uL11 family. As to quaternary structure, part of the ribosomal stalk of the 50S ribosomal subunit. Interacts with L10 and the large rRNA to form the base of the stalk. L10 forms an elongated spine to which L12 dimers bind in a sequential fashion forming a multimeric L10(L12)X complex. One or more lysine residues are methylated.

Its function is as follows. Forms part of the ribosomal stalk which helps the ribosome interact with GTP-bound translation factors. The sequence is that of Large ribosomal subunit protein uL11 from Helicobacter hepaticus (strain ATCC 51449 / 3B1).